The sequence spans 901 residues: Dipeptidyl-aminopeptidase B (901 aa).

A compositionally biased stretch (low complexity) spans 1-22 (MSSPRPSTSSTSSDSGLSVDTT). The tract at residues 1 to 67 (MSSPRPSTSS…EPFLPSAKKQ (67 aa)) is disordered. Residues 1–76 (MSSPRPSTSS…QAASGSRTSR (76 aa)) lie on the Cytoplasmic side of the membrane. The chain crosses the membrane as a helical; Signal-anchor for type II membrane protein span at residues 77 to 97 (LIWGLVILCVAGWLWGLVLFV). At 98 to 901 (TQNRSAQQSV…VKRSLPMLVN (804 aa)) the chain is on the vacuolar side. N-linked (GlcNAc...) asparagine glycosylation is found at Asn-334 and Asn-625. Ser-739 (charge relay system) is an active-site residue. The N-linked (GlcNAc...) asparagine glycan is linked to Asn-793. Catalysis depends on charge relay system residues Asp-816 and His-849.

Belongs to the peptidase S9B family.

Its subcellular location is the vacuole membrane. It catalyses the reaction Release of an N-terminal dipeptide, Xaa-Yaa-|-Zaa-, from a polypeptide, preferentially when Yaa is Pro, provided Zaa is neither Pro nor hydroxyproline.. Type IV dipeptidyl-peptidase which removes N-terminal dipeptides sequentially from polypeptides having unsubstituted N-termini provided that the penultimate residue is proline. In Aspergillus niger, this protein is Dipeptidyl-aminopeptidase B (dapB).